A 938-amino-acid chain; its full sequence is Isoleucine--tRNA ligase (938 aa).

Positions 58–68 (PYANGSIHIGH) match the 'HIGH' region motif. At lysine 183 the chain carries N6-acetyllysine. Glutamate 561 lines the L-isoleucyl-5'-AMP pocket. The 'KMSKS' region signature appears at 602–606 (KMSKS). Residue lysine 605 coordinates ATP. Zn(2+)-binding residues include cysteine 901, cysteine 904, cysteine 921, and cysteine 924.

This sequence belongs to the class-I aminoacyl-tRNA synthetase family. IleS type 1 subfamily. Monomer. Requires Zn(2+) as cofactor.

The protein localises to the cytoplasm. It catalyses the reaction tRNA(Ile) + L-isoleucine + ATP = L-isoleucyl-tRNA(Ile) + AMP + diphosphate. Its function is as follows. Catalyzes the attachment of isoleucine to tRNA(Ile). As IleRS can inadvertently accommodate and process structurally similar amino acids such as valine, to avoid such errors it has two additional distinct tRNA(Ile)-dependent editing activities. One activity is designated as 'pretransfer' editing and involves the hydrolysis of activated Val-AMP. The other activity is designated 'posttransfer' editing and involves deacylation of mischarged Val-tRNA(Ile). The polypeptide is Isoleucine--tRNA ligase (Escherichia coli O7:K1 (strain IAI39 / ExPEC)).